A 1829-amino-acid chain; its full sequence is Unconventional myosin-Va (1829 aa).

A Myosin N-terminal SH3-like domain is found at 8–60; it reads TKYARVWIPDPEEVWKSAELLKDYKPGDKVLQLRLEEGKDLEYCLDPKTKELP. A Myosin motor domain is found at 69–764; the sequence is VGENDLTALS…QVAYLEKIRA (696 aa). 163–170 provides a ligand contact to ATP; sequence GESGAGKT. Residues 599 to 635 form a disordered region; that stretch reads AISPTSATPSGRVPLSRTPVKPAKARPGQTSKEHKKT. Positions 644 to 666 are actin-binding; that stretch reads LHLLMETLNATTPHYVRCIKPND. IQ domains follow at residues 767–789, 790–814, 815–837, 838–862, 863–887, and 888–915; these read LRAACIRIQKTIRGWLMRKKYMR, MRRAAITIQRYVRGHQARCYATFLR, RTRAAIIIQKFQRMYVVRKRYQC, MRDATIALQALLRGYLVRNKYQMML, REHKSIIIQKHVRGWLARVHYHRTL, and KAIVYLQCCYRRMMAKRELKKLKIEARS. Coiled-coil stretches lie at residues 916 to 1239 and 1315 to 1419; these read VERY…PEVT and GLKE…ELEV. Disordered regions lie at residues 1106–1148 and 1170–1199; these read IPKP…SEKK and KQSLQDELDRKEEQALRAKAKEEERPPIRG. Positions 1117–1131 are enriched in polar residues; sequence THSSNESEYTFSSEI. Composition is skewed to basic and acidic residues over residues 1137 to 1148 and 1170 to 1196; these read LPLRMEEPSEKK and KQSLQDELDRKEEQALRAKAKEEERPP. Residues 1508-1784 enclose the Dilute domain; the sequence is TSTINGIKKV…IRTIQLRLRD (277 aa). T1734 carries the post-translational modification Phosphothreonine.

Belongs to the TRAFAC class myosin-kinesin ATPase superfamily. Myosin family. As to quaternary structure, may be a homodimer, which associates with multiple calmodulin or myosin light chains. In terms of tissue distribution, neuronal and non-neuronal cells of the brain.

The protein localises to the golgi apparatus membrane. The enzyme catalyses ATP + H2O = ADP + phosphate + H(+). In terms of biological role, processive actin-based motor that can move in large steps approximating the 36-nm pseudo-repeat of the actin filament. Can hydrolyze ATP in the presence of actin, which is essential for its function as a motor protein. Involved in melanosome transport. Also mediates the transport of vesicles to the plasma membrane. May also be required for some polarization process involved in dendrite formation. The sequence is that of Unconventional myosin-Va (MYO5A) from Gallus gallus (Chicken).